The sequence spans 792 residues: Host cell factor 2 (792 aa).

4 Kelch repeats span residues Leu-34 to Cys-79, Arg-83 to His-130, Lys-207 to Asn-255, and Met-257 to Ser-303. Positions Ala-359 to Lys-449 constitute a Fibronectin type-III 1 domain. A disordered region spans residues Ala-399 to Ser-447. Polar residues predominate over residues Gln-419–Glu-445. Lys-553 participates in a covalent cross-link: Glycyl lysine isopeptide (Lys-Gly) (interchain with G-Cter in SUMO2). Fibronectin type-III domains follow at residues Thr-583–Pro-675 and Phe-677–Lys-787.

In terms of assembly, binds KMT2A/MLL1. Component of the MLL1/MLL complex, at least composed of KMT2A/MLL1, ASH2L, RBBP5, DPY30, WDR5, MEN1, HCFC1 and HCFC2. Interacts with TASOR. As to expression, highly expressed in testis. Detected at lower levels in spleen, thymus, prostate, ovary, small intestine and colon.

The protein resides in the cytoplasm. Its subcellular location is the nucleus. This is Host cell factor 2 (HCFC2) from Homo sapiens (Human).